Reading from the N-terminus, the 530-residue chain is Polyprotein pp62 (530 aa).

It belongs to the asfivirus polyprotein pp62 family. As to quaternary structure, monomer. Predominantly exists as a monomer, with very little dimers. Homodimerization seems to be linked to low pH. In terms of assembly, homodimer; disulfide-linked. Homotrimer; disulfide-linked. Homohexamer. Post-translationally, monoubiquitinated in vitro by viral UBCv1. Specific enzymatic cleavages in vivo by the viral pS273R protease yield mature proteins.

It localises to the host cytoplasm. The protein localises to the host perinuclear region. It is found in the virion. In terms of biological role, essential for the correct assembly and maturation of the core of the virion. Functionally, component of the core shell. Binds to phosphatidylserine, which may enable the core shell binding with the inner membrane. Its function is as follows. Component of the core shell. Binds to phosphatidylserine and DNA, which may link the core shell to the inner membrane and to the viral nucleoid. Component of the core shell. The chain is Polyprotein pp62 from African swine fever virus (strain Badajoz 1971 Vero-adapted) (Ba71V).